Reading from the N-terminus, the 161-residue chain is Cyclic pyranopterin monophosphate synthase (161 aa).

Substrate contacts are provided by residues 75-77 (LCH) and 113-114 (ME). Residue aspartate 128 is part of the active site.

It belongs to the MoaC family. Homohexamer; trimer of dimers.

It carries out the reaction (8S)-3',8-cyclo-7,8-dihydroguanosine 5'-triphosphate = cyclic pyranopterin phosphate + diphosphate. The protein operates within cofactor biosynthesis; molybdopterin biosynthesis. Functionally, catalyzes the conversion of (8S)-3',8-cyclo-7,8-dihydroguanosine 5'-triphosphate to cyclic pyranopterin monophosphate (cPMP). The protein is Cyclic pyranopterin monophosphate synthase of Cupriavidus pinatubonensis (strain JMP 134 / LMG 1197) (Cupriavidus necator (strain JMP 134)).